The sequence spans 579 residues: Sulfite reductase [NADPH] hemoprotein beta-component (579 aa).

Positions 434, 440, 479, and 483 each coordinate [4Fe-4S] cluster. Residue C483 coordinates siroheme.

This sequence belongs to the nitrite and sulfite reductase 4Fe-4S domain family. As to quaternary structure, alpha(8)-beta(8). The alpha component is a flavoprotein, the beta component is a hemoprotein. It depends on siroheme as a cofactor. The cofactor is [4Fe-4S] cluster.

It carries out the reaction hydrogen sulfide + 3 NADP(+) + 3 H2O = sulfite + 3 NADPH + 4 H(+). It functions in the pathway sulfur metabolism; hydrogen sulfide biosynthesis; hydrogen sulfide from sulfite (NADPH route): step 1/1. Functionally, component of the sulfite reductase complex that catalyzes the 6-electron reduction of sulfite to sulfide. This is one of several activities required for the biosynthesis of L-cysteine from sulfate. This chain is Sulfite reductase [NADPH] hemoprotein beta-component, found in Salmonella choleraesuis (strain SC-B67).